Here is a 350-residue protein sequence, read N- to C-terminus: Twinfilin-1 (350 aa).

Residue Ser2 is modified to N-acetylserine. Positions 2 to 139 (SHQTGIQASE…SLHGYKKYLL (138 aa)) constitute an ADF-H 1 domain. Phosphoserine occurs at positions 143 and 277. One can recognise an ADF-H 2 domain in the interval 175 to 313 (LQGVAFPISR…TADFLYDEVH (139 aa)). Tyr309 is modified (phosphotyrosine). Residues 317–350 (HAHKQSFAKPKGPAGKRGIRRLIRGPAEAEATTD) are disordered. At Thr349 the chain carries Phosphothreonine.

This sequence belongs to the actin-binding proteins ADF family. Twinfilin subfamily. Interacts with G-actin; ADP-actin form and capping protein (CP). May also be able to interact with TWF2 and phosphoinositides, PI(4,5)P2. When bound to PI(4,5)P2, it is down-regulated. Interacts with ACTG1. In terms of processing, phosphorylated on serine and threonine residues. As to expression, widely expressed with highest levels in brain, liver and kidney. Also expressed in heart, lung and testis. Not detected in spleen or skeletal muscle.

It is found in the cytoplasm. The protein localises to the cytoskeleton. Functionally, actin-binding protein involved in motile and morphological processes. Inhibits actin polymerization, likely by sequestering G-actin. By capping the barbed ends of filaments, it also regulates motility. Seems to play an important role in clathrin-mediated endocytosis and distribution of endocytic organelles. This is Twinfilin-1 (Twf1) from Mus musculus (Mouse).